We begin with the raw amino-acid sequence, 117 residues long: Probable non-functional immunoglobulin heavy variable 3-16 (117 aa).

A signal peptide spans 1–19 (MEFGLSWVFLAGILKGVQC). Residues 20–44 (EVQLVESGGGLVQPGGSLRLSCAAS) are framework-1. Residues 21-117 (VQLVESGGGL…EDMAVYYCVR (97 aa)) form the Ig-like domain. The cysteines at positions 41 and 115 are disulfide-linked. The segment at 45–52 (GFTFSNSD) is complementarity-determining-1. The interval 53-69 (MNWARKAPGKGLEWVSG) is framework-2. Positions 70 to 77 (VSWNGSRT) are complementarity-determining-2. N-linked (GlcNAc...) asparagine glycosylation occurs at Asn73. Residues 78–115 (HYVDSVKRRFIISRDNSRNSLYLQKNRRRAEDMAVYYC) form a framework-3 region. The segment at 116-117 (VR) is complementarity-determining-3.

As to quaternary structure, immunoglobulins are composed of two identical heavy chains and two identical light chains; disulfide-linked.

It localises to the secreted. The protein localises to the cell membrane. In terms of biological role, probable non-functional open reading frame (ORF) of V region of the variable domain of immunoglobulin heavy chains. Non-functional ORF generally cannot participate in the synthesis of a productive immunoglobulin chain due to altered V-(D)-J or switch recombination and/or splicing site (at mRNA level) and/or conserved amino acid change (protein level). Immunoglobulins, also known as antibodies, are membrane-bound or secreted glycoproteins produced by B lymphocytes. In the recognition phase of humoral immunity, the membrane-bound immunoglobulins serve as receptors which, upon binding of a specific antigen, trigger the clonal expansion and differentiation of B lymphocytes into immunoglobulins-secreting plasma cells. Secreted immunoglobulins mediate the effector phase of humoral immunity, which results in the elimination of bound antigens. The antigen binding site is formed by the variable domain of one heavy chain, together with that of its associated light chain. Thus, each immunoglobulin has two antigen binding sites with remarkable affinity for a particular antigen. The variable domains are assembled by a process called V-(D)-J rearrangement and can then be subjected to somatic hypermutations which, after exposure to antigen and selection, allow affinity maturation for a particular antigen. This is Probable non-functional immunoglobulin heavy variable 3-16 from Homo sapiens (Human).